The sequence spans 147 residues: Lysozyme C-3 (147 aa).

The signal sequence occupies residues 1 to 18 (MKALVILGLLFLSVAVQG). A C-type lysozyme domain is found at 19 to 147 (KVFERCELAR…VSSYVEGCKL (129 aa)). Intrachain disulfides connect Cys-24–Cys-145, Cys-48–Cys-133, Cys-83–Cys-99, and Cys-95–Cys-113. Residues Glu-53 and Asp-71 contribute to the active site.

The protein belongs to the glycosyl hydrolase 22 family. As to quaternary structure, monomer. In terms of tissue distribution, expressed in stomach.

The protein localises to the secreted. It catalyses the reaction Hydrolysis of (1-&gt;4)-beta-linkages between N-acetylmuramic acid and N-acetyl-D-glucosamine residues in a peptidoglycan and between N-acetyl-D-glucosamine residues in chitodextrins.. In terms of biological role, lysozymes have primarily a bacteriolytic function; those in tissues and body fluids are associated with the monocyte-macrophage system and enhance the activity of immunoagents. The sequence is that of Lysozyme C-3 from Ovis aries (Sheep).